The following is a 360-amino-acid chain: UDP-N-acetylglucosamine--N-acetylmuramyl-(pentapeptide) pyrophosphoryl-undecaprenol N-acetylglucosamine transferase (360 aa).

Serine 198 and glutamine 289 together coordinate UDP-N-acetyl-alpha-D-glucosamine.

The protein belongs to the glycosyltransferase 28 family. MurG subfamily.

It is found in the cell membrane. The catalysed reaction is Mur2Ac(oyl-L-Ala-gamma-D-Glu-L-Lys-D-Ala-D-Ala)-di-trans,octa-cis-undecaprenyl diphosphate + UDP-N-acetyl-alpha-D-glucosamine = beta-D-GlcNAc-(1-&gt;4)-Mur2Ac(oyl-L-Ala-gamma-D-Glu-L-Lys-D-Ala-D-Ala)-di-trans,octa-cis-undecaprenyl diphosphate + UDP + H(+). Its pathway is cell wall biogenesis; peptidoglycan biosynthesis. In terms of biological role, cell wall formation. Catalyzes the transfer of a GlcNAc subunit on undecaprenyl-pyrophosphoryl-MurNAc-pentapeptide (lipid intermediate I) to form undecaprenyl-pyrophosphoryl-MurNAc-(pentapeptide)GlcNAc (lipid intermediate II). The sequence is that of UDP-N-acetylglucosamine--N-acetylmuramyl-(pentapeptide) pyrophosphoryl-undecaprenol N-acetylglucosamine transferase from Streptococcus pyogenes serotype M6 (strain ATCC BAA-946 / MGAS10394).